Reading from the N-terminus, the 367-residue chain is S-adenosylmethionine decarboxylase proenzyme 3 (367 aa).

Residues E9 and E12 contribute to the active site. S69 serves as the catalytic Schiff-base intermediate with substrate; via pyruvic acid. S69 carries the pyruvic acid (Ser); by autocatalysis modification. C83 serves as the catalytic Proton donor; for catalytic activity. Residues S234 and H247 each act as proton acceptor; for processing activity in the active site.

Belongs to the eukaryotic AdoMetDC family. The cofactor is pyruvate. Is synthesized initially as an inactive proenzyme. Formation of the active enzyme involves a self-maturation process in which the active site pyruvoyl group is generated from an internal serine residue via an autocatalytic post-translational modification. Two non-identical subunits are generated from the proenzyme in this reaction, and the pyruvate is formed at the N-terminus of the alpha chain, which is derived from the carboxyl end of the proenzyme. The post-translation cleavage follows an unusual pathway, termed non-hydrolytic serinolysis, in which the side chain hydroxyl group of the serine supplies its oxygen atom to form the C-terminus of the beta chain, while the remainder of the serine residue undergoes an oxidative deamination to produce ammonia and the pyruvoyl group blocking the N-terminus of the alpha chain.

It carries out the reaction S-adenosyl-L-methionine + H(+) = S-adenosyl 3-(methylsulfanyl)propylamine + CO2. It participates in amine and polyamine biosynthesis; S-adenosylmethioninamine biosynthesis; S-adenosylmethioninamine from S-adenosyl-L-methionine: step 1/1. The chain is S-adenosylmethionine decarboxylase proenzyme 3 (SAMDC3) from Brassica juncea (Indian mustard).